A 130-amino-acid chain; its full sequence is Small ribosomal subunit protein uS9 (130 aa).

The protein belongs to the universal ribosomal protein uS9 family.

The chain is Small ribosomal subunit protein uS9 from Shewanella sediminis (strain HAW-EB3).